The chain runs to 354 residues: Uroporphyrinogen decarboxylase (354 aa).

Residues 27 to 31 (RQAGR), Asp-77, Tyr-154, Thr-209, and His-327 contribute to the substrate site.

Belongs to the uroporphyrinogen decarboxylase family. Homodimer.

The protein resides in the cytoplasm. The enzyme catalyses uroporphyrinogen III + 4 H(+) = coproporphyrinogen III + 4 CO2. The protein operates within porphyrin-containing compound metabolism; protoporphyrin-IX biosynthesis; coproporphyrinogen-III from 5-aminolevulinate: step 4/4. Functionally, catalyzes the decarboxylation of four acetate groups of uroporphyrinogen-III to yield coproporphyrinogen-III. This chain is Uroporphyrinogen decarboxylase, found in Pectobacterium carotovorum subsp. carotovorum (strain PC1).